A 699-amino-acid polypeptide reads, in one-letter code: D-(-)-3-hydroxybutyrate oligomer hydrolase (699 aa).

The signal sequence occupies residues 1–33 (MTAIRGGSRRAPGLALALLGGVLLGACHGDENA). Residue Ser-311 is the Charge relay system of the active site.

It belongs to the D-(-)-3-hydroxybutyrate oligomer hydrolase family.

The protein resides in the secreted. It carries out the reaction (3R)-hydroxybutanoate dimer + H2O = 2 (R)-3-hydroxybutanoate + H(+). Its pathway is lipid metabolism; butanoate metabolism. In terms of biological role, participates in the degradation of poly-3-hydroxybutyrate (PHB). It works downstream of poly(3-hydroxybutyrate) depolymerase, hydrolyzing D(-)-3-hydroxybutyrate oligomers of various length (3HB-oligomers) into 3HB-monomers. The polypeptide is D-(-)-3-hydroxybutyrate oligomer hydrolase (Burkholderia mallei (strain SAVP1)).